The following is a 1937-amino-acid chain: Collagen-like protein 7 (1937 aa).

Residues N6 and N21 are each glycosylated (N-linked (GlcNAc...) asparagine; by host). Disordered stretches follow at residues 88 to 248 (CKGN…KGDK), 294 to 531 (NLKG…PDLG), 583 to 643 (LKGD…NQGV), and 670 to 1144 (IKGD…DTAT). 5 Collagen-like domains span residues 102–161 (GPKG…KGEK), 168–227 (GEKG…KGDI), 297–356 (GEKG…KGEK), 363–422 (GDKG…IGEK), and 453–512 (GDKG…KGDK). A compositionally biased stretch (basic and acidic residues) spans 296 to 514 (KGEKGDKGNK…DKGDKGDKGD (219 aa)). N-linked (GlcNAc...) asparagine; by host glycosylation is present at N515. 3 stretches are compositionally biased toward basic and acidic residues: residues 584–605 (KGDK…KGDK), 614–625 (KGEKGDKGDKGD), and 670–899 (IKGD…KGDK). Collagen-like domains lie at 672–731 (GDKG…KGDK), 735–854 (GNKG…KGNI), 867–926 (GLKG…KGDK), 936–995 (GIKG…KGDK), and 1023–1142 (GSKG…KGDT). Residue N902 is glycosylated (N-linked (GlcNAc...) asparagine; by host). The segment covering 907 to 1141 (YKGDKGDKGS…DKGDKGDKGD (235 aa)) has biased composition (basic and acidic residues). N1178, N1192, N1212, N1217, N1245, N1246, N1255, N1317, N1422, N1427, N1432, N1443, N1452, N1477, N1494, N1506, N1513, N1533, N1598, N1619, N1620, N1632, N1641, N1663, N1664, N1672, N1682, N1683, N1732, N1735, N1746, N1756, N1784, N1842, and N1934 each carry an N-linked (GlcNAc...) asparagine; by host glycan.

Post-translationally, may be hydroxylated on lysine by the viral-encoded procollagen-lysine,2-oxoglutarate 5-dioxygenase.

The protein resides in the virion. In terms of biological role, may participate in the formation of a layer of cross-linked glycosylated fibrils at the viral surface thus giving it a hairy-like appearance. The chain is Collagen-like protein 7 from Acanthamoeba polyphaga mimivirus (APMV).